We begin with the raw amino-acid sequence, 306 residues long: uncharacterized protein (306 aa).

This is an uncharacterized protein from Escherichia coli (strain K12).